Reading from the N-terminus, the 902-residue chain is Protein translocase subunit SecA (902 aa).

ATP contacts are provided by residues Gln85, 103 to 107 (GEGKT), and Asp492. Residues 846–902 (LSYSGGGEEPNQRPKSPRRRSERKIGPNEPCPCGSGKKFKKCHGRVGAPPLPTSQSQ) form a disordered region. Positions 876, 878, 887, and 888 each coordinate Zn(2+).

This sequence belongs to the SecA family. As to quaternary structure, monomer and homodimer. Part of the essential Sec protein translocation apparatus which comprises SecA, SecYEG and auxiliary proteins SecDF. Other proteins may also be involved. The cofactor is Zn(2+).

It localises to the cell membrane. It is found in the cytoplasm. It carries out the reaction ATP + H2O + cellular proteinSide 1 = ADP + phosphate + cellular proteinSide 2.. Functionally, part of the Sec protein translocase complex. Interacts with the SecYEG preprotein conducting channel. Has a central role in coupling the hydrolysis of ATP to the transfer of proteins into and across the cell membrane, serving as an ATP-driven molecular motor driving the stepwise translocation of polypeptide chains across the membrane. The chain is Protein translocase subunit SecA from Rubrobacter xylanophilus (strain DSM 9941 / JCM 11954 / NBRC 16129 / PRD-1).